Here is a 247-residue protein sequence, read N- to C-terminus: DNA polymerase sliding clamp (247 aa).

Belongs to the PCNA family. As to quaternary structure, homotrimer. The subunits circularize to form a toroid; DNA passes through its center. Replication factor C (RFC) is required to load the toroid on the DNA.

In terms of biological role, sliding clamp subunit that acts as a moving platform for DNA processing. Responsible for tethering the catalytic subunit of DNA polymerase and other proteins to DNA during high-speed replication. The polypeptide is DNA polymerase sliding clamp (Methanospirillum hungatei JF-1 (strain ATCC 27890 / DSM 864 / NBRC 100397 / JF-1)).